We begin with the raw amino-acid sequence, 469 residues long: Glutamate--tRNA ligase (469 aa).

The 'HIGH' region motif lies at 11–21; sequence PSPTGFIHLGN. The span at 116-131 shows a compositional bias: basic and acidic residues; that stretch reads ASGEKPRYDGTWRPEP. The segment at 116-139 is disordered; it reads ASGEKPRYDGTWRPEPGKVLPTPP. Residues 243–247 carry the 'KMSKS' region motif; that stretch reads KMSKR. Lysine 246 serves as a coordination point for ATP.

This sequence belongs to the class-I aminoacyl-tRNA synthetase family. Glutamate--tRNA ligase type 1 subfamily. In terms of assembly, monomer.

The protein resides in the cytoplasm. It carries out the reaction tRNA(Glu) + L-glutamate + ATP = L-glutamyl-tRNA(Glu) + AMP + diphosphate. In terms of biological role, catalyzes the attachment of glutamate to tRNA(Glu) in a two-step reaction: glutamate is first activated by ATP to form Glu-AMP and then transferred to the acceptor end of tRNA(Glu). The sequence is that of Glutamate--tRNA ligase from Paraburkholderia phymatum (strain DSM 17167 / CIP 108236 / LMG 21445 / STM815) (Burkholderia phymatum).